The chain runs to 201 residues: Holliday junction branch migration complex subunit RuvA (201 aa).

The segment at 1–64 (MYEYIKGKYI…QDFIGLYGFL (64 aa)) is domain I. Positions 65–143 (TKDELEMFNK…STDISKGNSE (79 aa)) are domain II. Residues 144 to 154 (INNLDVDYDEH) form a flexible linker region. Residues 154-201 (HSKKLEEVRFALNSLGYSEKETDRAINNVDKSEGIENIIKSCLRFLMN) are domain III.

It belongs to the RuvA family. In terms of assembly, homotetramer. Forms an RuvA(8)-RuvB(12)-Holliday junction (HJ) complex. HJ DNA is sandwiched between 2 RuvA tetramers; dsDNA enters through RuvA and exits via RuvB. An RuvB hexamer assembles on each DNA strand where it exits the tetramer. Each RuvB hexamer is contacted by two RuvA subunits (via domain III) on 2 adjacent RuvB subunits; this complex drives branch migration. In the full resolvosome a probable DNA-RuvA(4)-RuvB(12)-RuvC(2) complex forms which resolves the HJ.

The protein resides in the cytoplasm. In terms of biological role, the RuvA-RuvB-RuvC complex processes Holliday junction (HJ) DNA during genetic recombination and DNA repair, while the RuvA-RuvB complex plays an important role in the rescue of blocked DNA replication forks via replication fork reversal (RFR). RuvA specifically binds to HJ cruciform DNA, conferring on it an open structure. The RuvB hexamer acts as an ATP-dependent pump, pulling dsDNA into and through the RuvAB complex. HJ branch migration allows RuvC to scan DNA until it finds its consensus sequence, where it cleaves and resolves the cruciform DNA. The protein is Holliday junction branch migration complex subunit RuvA of Clostridium acetobutylicum (strain ATCC 824 / DSM 792 / JCM 1419 / IAM 19013 / LMG 5710 / NBRC 13948 / NRRL B-527 / VKM B-1787 / 2291 / W).